We begin with the raw amino-acid sequence, 196 residues long: Small ribosomal subunit protein uS4c (196 aa).

Positions 16-36 are disordered; that stretch reads GALPGLTRKTPKSGSNLKKKF. The S4 RNA-binding domain occupies 89–169; that stretch reads MRLDNILFRL…LPKHLTIDTL (81 aa).

It belongs to the universal ribosomal protein uS4 family. As to quaternary structure, part of the 30S ribosomal subunit. Contacts protein S5. The interaction surface between S4 and S5 is involved in control of translational fidelity.

It is found in the plastid. Its subcellular location is the chloroplast. Functionally, one of the primary rRNA binding proteins, it binds directly to 16S rRNA where it nucleates assembly of the body of the 30S subunit. With S5 and S12 plays an important role in translational accuracy. The chain is Small ribosomal subunit protein uS4c (rps4) from Brachypodium pinnatum (Tor grass).